A 272-amino-acid polypeptide reads, in one-letter code: Shikimate dehydrogenase (NADP(+)) (272 aa).

Shikimate-binding positions include 14–16 (SKS) and T61. Residue K65 is the Proton acceptor of the active site. E77 contacts NADP(+). Positions 86 and 102 each coordinate shikimate. NADP(+)-binding positions include 126–130 (GAGGA), 149–154 (NRTVSR), and M213. Y215 is a shikimate binding site. G237 contributes to the NADP(+) binding site.

Belongs to the shikimate dehydrogenase family. Homodimer.

It catalyses the reaction shikimate + NADP(+) = 3-dehydroshikimate + NADPH + H(+). It functions in the pathway metabolic intermediate biosynthesis; chorismate biosynthesis; chorismate from D-erythrose 4-phosphate and phosphoenolpyruvate: step 4/7. Functionally, involved in the biosynthesis of the chorismate, which leads to the biosynthesis of aromatic amino acids. Catalyzes the reversible NADPH linked reduction of 3-dehydroshikimate (DHSA) to yield shikimate (SA). The chain is Shikimate dehydrogenase (NADP(+)) from Shigella flexneri serotype 5b (strain 8401).